Here is a 317-residue protein sequence, read N- to C-terminus: Putrescine transport system permease protein PotH (317 aa).

Residues 1 to 31 lie on the Cytoplasmic side of the membrane; the sequence is MSTLEPAAQSKPPGGFKLWLSQLQMKHGRKL. The chain crosses the membrane as a helical span at residues 32–51; it reads VIALPYIWLILLFLLPFLIV. The Periplasmic portion of the chain corresponds to 52–104; the sequence is FKISLAEMARAIPPYTELMEWADGQLSITLNLGNFLQLTDDPLYFDAYLQSLQ. Residues 99–305 enclose the ABC transmembrane type-1 domain; that stretch reads YLQSLQVAAI…LLLIVPIMWF (207 aa). Residues 105-124 traverse the membrane as a helical segment; that stretch reads VAAISTFCCLLIGYPLAWAV. Topologically, residues 125-133 are cytoplasmic; sequence AHSKPSTRN. Residues 134-153 traverse the membrane as a helical segment; that stretch reads ILLLLVILPSWTSFLIRVYA. Residues 154–184 lie on the Periplasmic side of the membrane; the sequence is WMGILKNNGVLNNFLLWLGVIDQPLTILHTN. A helical transmembrane segment spans residues 185–204; the sequence is LAVYIGIVYAYVPFMVLPIY. Residues 205 to 239 lie on the Cytoplasmic side of the membrane; sequence TALIRIDYSLVEAALDLGARPLKTFFTVIVPLTKG. A helical membrane pass occupies residues 240 to 259; sequence GIIAGSMLVFIPAVGEFVIP. Over 260 to 284 the chain is Periplasmic; the sequence is ELLGGPDSIMIGRVLWQEFFNNRDW. A helical transmembrane segment spans residues 285 to 304; sequence PVASAVAIIMLLLLIVPIMW. The Cytoplasmic portion of the chain corresponds to 305–317; that stretch reads FHKHQQKSVGEHG.

The protein belongs to the binding-protein-dependent transport system permease family. CysTW subfamily. The complex is composed of two ATP-binding proteins (PotG), two transmembrane proteins (PotH and PotI) and a solute-binding protein (PotF).

The protein resides in the cell inner membrane. Its activity is regulated as follows. Transport is feedback inhibited by intracellular polyamines. Its function is as follows. Part of the ABC transporter complex PotFGHI involved in putrescine uptake. Responsible for the translocation of the substrate across the membrane. Imports putrescine for maintenance of the optimal concentration of polyamines necessary for cell growth in the presence of glucose. This chain is Putrescine transport system permease protein PotH, found in Escherichia coli (strain K12).